An 84-amino-acid chain; its full sequence is Putative defensin-like protein 139 (84 aa).

The signal sequence occupies residues 1-28 (MEPSNQIFFYLRRSKLLSGLGEIRMAKG). Intrachain disulfides connect C37–C81, C46–C65, C51–C75, and C55–C77.

This sequence belongs to the DEFL family.

Its subcellular location is the secreted. The protein is Putative defensin-like protein 139 (LCR7) of Arabidopsis thaliana (Mouse-ear cress).